A 378-amino-acid polypeptide reads, in one-letter code: Acetylornithine deacetylase (378 aa).

His76 contributes to the Zn(2+) binding site. Residue Asp78 is part of the active site. Position 108 (Asp108) interacts with Zn(2+). Glu140 is an active-site residue. Zn(2+) contacts are provided by Glu141, Glu165, and His351.

This sequence belongs to the peptidase M20A family. ArgE subfamily. Homodimer. Requires Zn(2+) as cofactor. It depends on Co(2+) as a cofactor. The cofactor is glutathione.

Its subcellular location is the cytoplasm. It carries out the reaction N(2)-acetyl-L-ornithine + H2O = L-ornithine + acetate. The protein operates within amino-acid biosynthesis; L-arginine biosynthesis; L-ornithine from N(2)-acetyl-L-ornithine (linear): step 1/1. Functionally, catalyzes the hydrolysis of the amide bond of N(2)-acetylated L-amino acids. Cleaves the acetyl group from N-acetyl-L-ornithine to form L-ornithine, an intermediate in L-arginine biosynthesis pathway, and a branchpoint in the synthesis of polyamines. This Aliivibrio salmonicida (strain LFI1238) (Vibrio salmonicida (strain LFI1238)) protein is Acetylornithine deacetylase.